Consider the following 148-residue polypeptide: NADPH-dependent 7-cyano-7-deazaguanine reductase (148 aa).

Cysteine 50 (thioimide intermediate) is an active-site residue. The active-site Proton donor is the aspartate 57. Substrate contacts are provided by residues 72–74 and 91–92; these read VES and HE.

Belongs to the GTP cyclohydrolase I family. QueF type 1 subfamily.

It is found in the cytoplasm. It carries out the reaction 7-aminomethyl-7-carbaguanine + 2 NADP(+) = 7-cyano-7-deazaguanine + 2 NADPH + 3 H(+). It functions in the pathway tRNA modification; tRNA-queuosine biosynthesis. In terms of biological role, catalyzes the NADPH-dependent reduction of 7-cyano-7-deazaguanine (preQ0) to 7-aminomethyl-7-deazaguanine (preQ1). This is NADPH-dependent 7-cyano-7-deazaguanine reductase from Helicobacter acinonychis (strain Sheeba).